The chain runs to 282 residues: Elongation factor Ts (282 aa).

Residues 80–83 (TDFV) are involved in Mg(2+) ion dislocation from EF-Tu.

It belongs to the EF-Ts family.

It localises to the cytoplasm. In terms of biological role, associates with the EF-Tu.GDP complex and induces the exchange of GDP to GTP. It remains bound to the aminoacyl-tRNA.EF-Tu.GTP complex up to the GTP hydrolysis stage on the ribosome. The protein is Elongation factor Ts of Protochlamydia amoebophila (strain UWE25).